A 213-amino-acid polypeptide reads, in one-letter code: Orotate phosphoribosyltransferase (213 aa).

K26 provides a ligand contact to 5-phospho-alpha-D-ribose 1-diphosphate. 34–35 provides a ligand contact to orotate; that stretch reads FF. Residues 72–73, R99, K100, K103, H105, and 124–132 contribute to the 5-phospho-alpha-D-ribose 1-diphosphate site; these read YK and DDVITAGTA. Positions 128 and 156 each coordinate orotate.

The protein belongs to the purine/pyrimidine phosphoribosyltransferase family. PyrE subfamily. As to quaternary structure, homodimer. Mg(2+) is required as a cofactor.

The enzyme catalyses orotidine 5'-phosphate + diphosphate = orotate + 5-phospho-alpha-D-ribose 1-diphosphate. The protein operates within pyrimidine metabolism; UMP biosynthesis via de novo pathway; UMP from orotate: step 1/2. Functionally, catalyzes the transfer of a ribosyl phosphate group from 5-phosphoribose 1-diphosphate to orotate, leading to the formation of orotidine monophosphate (OMP). This Salmonella typhi protein is Orotate phosphoribosyltransferase.